The following is a 151-amino-acid chain: Deoxyuridine 5'-triphosphate nucleotidohydrolase (151 aa).

Substrate is bound by residues R70 to G72, N83, L87 to D89, and M97.

It belongs to the dUTPase family. Requires Mg(2+) as cofactor.

The catalysed reaction is dUTP + H2O = dUMP + diphosphate + H(+). The protein operates within pyrimidine metabolism; dUMP biosynthesis; dUMP from dCTP (dUTP route): step 2/2. Its function is as follows. This enzyme is involved in nucleotide metabolism: it produces dUMP, the immediate precursor of thymidine nucleotides and it decreases the intracellular concentration of dUTP so that uracil cannot be incorporated into DNA. This Pseudomonas fluorescens (strain SBW25) protein is Deoxyuridine 5'-triphosphate nucleotidohydrolase.